The primary structure comprises 269 residues: Embryonic polyadenylate-binding protein 2 (269 aa).

The interval 26–54 (EAQGWGAWGRTEKTSLVPSAGSDKEAEEN) is disordered. Positions 139-216 (RSVYVGNVDY…RVIKVLPKRT (78 aa)) constitute an RRM domain. A disordered region spans residues 240–269 (LQGSLQRKPRLRPHGQSRGRGRASPWFSPY). Residues 246 to 260 (RKPRLRPHGQSRGRG) show a composition bias toward basic residues.

The protein localises to the cytoplasm. Functionally, binds the poly(A) tail of mRNA. The protein is Embryonic polyadenylate-binding protein 2 (Pabpn1l) of Rattus norvegicus (Rat).